We begin with the raw amino-acid sequence, 121 residues long: Small ribosomal subunit protein uS13 (121 aa).

The tract at residues Gly95–Ser121 is disordered.

It belongs to the universal ribosomal protein uS13 family. Part of the 30S ribosomal subunit. Forms a loose heterodimer with protein S19. Forms two bridges to the 50S subunit in the 70S ribosome.

Located at the top of the head of the 30S subunit, it contacts several helices of the 16S rRNA. In the 70S ribosome it contacts the 23S rRNA (bridge B1a) and protein L5 of the 50S subunit (bridge B1b), connecting the 2 subunits; these bridges are implicated in subunit movement. Contacts the tRNAs in the A and P-sites. The chain is Small ribosomal subunit protein uS13 from Campylobacter jejuni subsp. jejuni serotype O:6 (strain 81116 / NCTC 11828).